The primary structure comprises 498 residues: Delta(14)-sterol reductase erg24A (498 aa).

Helical transmembrane passes span 30 to 50 (LGAF…TFLC), 91 to 111 (VTVW…FLPG), 136 to 156 (ILIL…FVVW), and 163 to 183 (YVQI…FVYA). Asn257 is a glycosylation site (N-linked (GlcNAc...) asparagine). The next 3 helical transmembrane spans lie at 275 to 295 (IVLS…MEPA), 302 to 322 (VIMD…VPFI), and 339 to 359 (LREI…FRGA). NADP(+) is bound by residues Lys363, Arg367, Trp395, and 402–403 (NY). An N-linked (GlcNAc...) asparagine glycan is attached at Asn429. A helical membrane pass occupies residues 444–464 (VRGWGMIFTYFFLVYFGALLI). Residues Asp470, 474–478 (CKSKY), and Tyr485 contribute to the NADP(+) site.

This sequence belongs to the ERG4/ERG24 family.

Its subcellular location is the endoplasmic reticulum membrane. Its pathway is steroid metabolism; ergosterol biosynthesis. Functionally, delta(14)-sterol reductase; part of the third module of ergosterol biosynthesis pathway that includes the late steps of the pathway. Catalyzes the reduction of the C14=C15 double bond within 4,4,24-trimethyl ergosta-8,14,24(28)-trienolto produce 4,4-dimethylfecosterol. The third module or late pathway involves the ergosterol synthesis itself through consecutive reactions that mainly occur in the endoplasmic reticulum (ER) membrane. Firstly, the squalene synthase erg9 catalyzes the condensation of 2 farnesyl pyrophosphate moieties to form squalene, which is the precursor of all steroids. Squalene synthase is crucial for balancing the incorporation of farnesyl diphosphate (FPP) into sterol and nonsterol isoprene synthesis. Secondly, squalene is converted into lanosterol by the consecutive action of the squalene epoxidase erg1 and the lanosterol synthase erg7. Then, the delta(24)-sterol C-methyltransferase erg6 methylates lanosterol at C-24 to produce eburicol. Eburicol is the substrate of the sterol 14-alpha demethylase encoded by cyp51A and cyp51B, to yield 4,4,24-trimethyl ergosta-8,14,24(28)-trienol. The C-14 reductase erg24 then reduces the C14=C15 double bond which leads to 4,4-dimethylfecosterol. A sequence of further demethylations at C-4, involving the C-4 demethylation complex containing the C-4 methylsterol oxidases erg25A or erg25B, the sterol-4-alpha-carboxylate 3-dehydrogenase erg26 and the 3-keto-steroid reductase erg27, leads to the production of fecosterol via 4-methylfecosterol. The C-8 sterol isomerase erg2 then catalyzes the reaction which results in unsaturation at C-7 in the B ring of sterols and thus converts fecosterol to episterol. The sterol-C5-desaturase erg3B then catalyzes the introduction of a C-5 double bond in the B ring to produce 5-dehydroepisterol. The 2 other sterol-C5-desaturases, erg3A and erg3C, seem to be less important in ergosterol biosynthesis. The C-22 sterol desaturase erg5 further converts 5-dehydroepisterol into ergosta-5,7,22,24(28)-tetraen-3beta-ol by forming the C-22(23) double bond in the sterol side chain. Finally, ergosta-5,7,22,24(28)-tetraen-3beta-ol is substrate of the C-24(28) sterol reductases erg4A and erg4B to produce ergosterol. Possible alternative sterol biosynthetic pathways might exist from fecosterol to ergosterol, depending on the activities of the erg3 isoforms. In Aspergillus fumigatus (strain ATCC MYA-4609 / CBS 101355 / FGSC A1100 / Af293) (Neosartorya fumigata), this protein is Delta(14)-sterol reductase erg24A.